The following is a 360-amino-acid chain: Probable dual-specificity RNA methyltransferase RlmN (360 aa).

The Proton acceptor role is filled by E91. One can recognise a Radical SAM core domain in the interval 97–335; sequence QHYGQSVCVT…CVVRQEHGTD (239 aa). Residues C104 and C340 are joined by a disulfide bond. Residues C111, C115, and C118 each coordinate [4Fe-4S] cluster. Residues 163–164, S195, 218–220, and N296 each bind S-adenosyl-L-methionine; these read GE and SLH. C340 (S-methylcysteine intermediate) is an active-site residue.

It belongs to the radical SAM superfamily. RlmN family. It depends on [4Fe-4S] cluster as a cofactor.

The protein resides in the cytoplasm. The enzyme catalyses adenosine(2503) in 23S rRNA + 2 reduced [2Fe-2S]-[ferredoxin] + 2 S-adenosyl-L-methionine = 2-methyladenosine(2503) in 23S rRNA + 5'-deoxyadenosine + L-methionine + 2 oxidized [2Fe-2S]-[ferredoxin] + S-adenosyl-L-homocysteine. The catalysed reaction is adenosine(37) in tRNA + 2 reduced [2Fe-2S]-[ferredoxin] + 2 S-adenosyl-L-methionine = 2-methyladenosine(37) in tRNA + 5'-deoxyadenosine + L-methionine + 2 oxidized [2Fe-2S]-[ferredoxin] + S-adenosyl-L-homocysteine. Its function is as follows. Specifically methylates position 2 of adenine 2503 in 23S rRNA and position 2 of adenine 37 in tRNAs. The protein is Probable dual-specificity RNA methyltransferase RlmN of Streptococcus equi subsp. zooepidemicus (strain H70).